The sequence spans 60 residues: Hemocyte defensin Cg-Defh2 (60 aa).

The signal sequence occupies residues 1–17; sequence LLTLAVLLMVSADMAFA. Residues Phe-19, Gly-20, and Cys-21 each coordinate beta-D-GlcNAc-(1-&gt;4)-Mur2Ac(oyl-L-Ala-gamma-D-Glu-L-Lys-D-Ala-D-Ala)-di-trans,octa-cis-undecaprenyl diphosphate. Disulfide bonds link Cys-21/Cys-42, Cys-28/Cys-51, Cys-32/Cys-53, and Cys-37/Cys-56. Residues 22 to 25 are binds to membrane interface; that stretch reads PGDQ. His-31 serves as a coordination point for beta-D-GlcNAc-(1-&gt;4)-Mur2Ac(oyl-L-Ala-gamma-D-Glu-L-Lys-D-Ala-D-Ala)-di-trans,octa-cis-undecaprenyl diphosphate. The tract at residues 43–49 is binds to membrane interface; the sequence is DAVTLWL. A beta-D-GlcNAc-(1-&gt;4)-Mur2Ac(oyl-L-Ala-gamma-D-Glu-L-Lys-D-Ala-D-Ala)-di-trans,octa-cis-undecaprenyl diphosphate-binding site is contributed by Cys-51.

This sequence belongs to the invertebrate defensin family. As to expression, expressed in hemocytes.

It is found in the secreted. It localises to the target cell membrane. Its function is as follows. Antibacterial peptide mostly active against Gram-positive bacteria. It acts by selectively inhibiting peptidoglycan biosynthesis through complex formation with the cell wall precursor lipid II (1:1 molar ratio) thus inhibiting cell wall synthesis. It does not disrupt cell membranes. Is noticeably more potent than Cg-Defh1. In Magallana gigas (Pacific oyster), this protein is Hemocyte defensin Cg-Defh2.